The following is an 834-amino-acid chain: Serine/threonine-protein kinase TNNI3K (834 aa).

Residue Gly-2 is the site of N-myristoyl glycine attachment. Positions 21–49 form a coiled coil; that stretch reads SESYAIIIERLEDDLQIKENEFQELRHIF. 10 ANK repeats span residues 66-96, 100-129, 133-162, 166-195, 199-229, 233-262, 268-297, 303-334, 338-367, and 380-409; these read RGLS…RPSR, NGFP…DVQQ, GGLT…NVNV, VFFT…DVNV, VGDR…DVNA, EDHV…EVQP, YGDT…TESL, FSET…NINH, DGHT…DMNL, and DEQT…PQDE. Positions 462-722 constitute a Protein kinase domain; the sequence is IEFHEIIGSG…EVVRKLEECL (261 aa). ATP contacts are provided by residues 468–476 and Lys-489; that span reads IGSGSFGKV. The active-site Proton acceptor is the Asp-587. The disordered stretch occupies residues 815–834; it reads PMSPMHLHSRRNSGSFEDGN.

This sequence belongs to the protein kinase superfamily. TKL Ser/Thr protein kinase family. MAP kinase kinase kinase subfamily. In terms of assembly, interacts with TNNI3, ACTC, ACTA1, MYBPC3, AIP, FABP3 and HADHB. It depends on Mg(2+) as a cofactor. In terms of processing, autophosphorylated.

The protein localises to the nucleus. The protein resides in the cytoplasm. It catalyses the reaction L-seryl-[protein] + ATP = O-phospho-L-seryl-[protein] + ADP + H(+). The catalysed reaction is L-threonyl-[protein] + ATP = O-phospho-L-threonyl-[protein] + ADP + H(+). Functionally, may play a role in cardiac physiology. This Mus musculus (Mouse) protein is Serine/threonine-protein kinase TNNI3K.